We begin with the raw amino-acid sequence, 132 residues long: Small ribosomal subunit protein uS8c (132 aa).

It belongs to the universal ribosomal protein uS8 family. As to quaternary structure, part of the 30S ribosomal subunit.

Its subcellular location is the plastid. It is found in the chloroplast. In terms of biological role, one of the primary rRNA binding proteins, it binds directly to 16S rRNA central domain where it helps coordinate assembly of the platform of the 30S subunit. This Nymphaea alba (White water-lily) protein is Small ribosomal subunit protein uS8c (rps8).